The primary structure comprises 186 residues: MQHDLDNQIIACGEDIDHTLAMEELEHWDWTKQNRLPFQLYLAVMHLNEIPEWLDETMLIECVYYFKELINHRDPYDTDEFNAWNMNGKPFKTMWKICKFCYTNCEDPDEYRFMYNRTVFVEDAEDIINRLQDGSSWCQICHTCPLFNISVIYENSPNKKRRYSSSSEEDEYMSNSFYVKHPNSRH.

The polypeptide is Putative non-structural protein NS3 (NS3) (Lepidoptera (butterflies and moths)).